The chain runs to 175 residues: Large ribosomal subunit protein uL10 (175 aa).

Belongs to the universal ribosomal protein uL10 family. In terms of assembly, part of the ribosomal stalk of the 50S ribosomal subunit. The N-terminus interacts with L11 and the large rRNA to form the base of the stalk. The C-terminus forms an elongated spine to which L12 dimers bind in a sequential fashion forming a multimeric L10(L12)X complex.

Functionally, forms part of the ribosomal stalk, playing a central role in the interaction of the ribosome with GTP-bound translation factors. This is Large ribosomal subunit protein uL10 from Prochlorococcus marinus subsp. pastoris (strain CCMP1986 / NIES-2087 / MED4).